Reading from the N-terminus, the 464-residue chain is CD-NTase-associated protein 4 (464 aa).

Positions 1–228 (MSASLLEKQS…FENFICHALE (228 aa)) are N-terminal endonuclease domain. Positions 229 to 464 (EDRTQWLSDP…EYMPTAELNI (236 aa)) are C-terminal SAVED domain.

Belongs to the Cap4 nuclease family. A monomer in the absence of cAAA, in its presence it forms oligomers.

Its activity is regulated as follows. DNase activity is activated upon ligand binding. Its function is as follows. Effector DNase of a CBASS antivirus system. CBASS (cyclic oligonucleotide-based antiphage signaling system) provides immunity against bacteriophage. The CD-NTase protein synthesizes cyclic nucleotides in response to infection; these serve as specific second messenger signals. The signals activate a diverse range of effectors, leading to bacterial cell death and thus abortive phage infection. A type II-C CBASS system. In terms of biological role, probably in the presence of its endogenous cyclic nucleotide (synthesized by the cognate CD-NTase protein in the CBASS operon), or of 2',3',3'-cyclic AMP-AMP-AMP (cAAA) synthesized by Acinetobacter sp. ATCC 27244, endonucleolytically degrades dsDNA in a non-sequence specific manner. It is not activated by other cyclic nucleotides. The sequence is that of CD-NTase-associated protein 4 from Moraxella osloensis.